Reading from the N-terminus, the 294-residue chain is Elongation factor Ts (294 aa).

Residues 80–83 (TDFV) form an involved in Mg(2+) ion dislocation from EF-Tu region.

This sequence belongs to the EF-Ts family.

The protein resides in the cytoplasm. Associates with the EF-Tu.GDP complex and induces the exchange of GDP to GTP. It remains bound to the aminoacyl-tRNA.EF-Tu.GTP complex up to the GTP hydrolysis stage on the ribosome. In Listeria innocua serovar 6a (strain ATCC BAA-680 / CLIP 11262), this protein is Elongation factor Ts.